A 326-amino-acid chain; its full sequence is Zona pellucida-binding protein 2 (326 aa).

The N-terminal stretch at 1 to 19 (MLAWALLYAVLWSLAGVGS) is a signal peptide. N-linked (GlcNAc...) asparagine glycosylation is found at asparagine 86, asparagine 220, and asparagine 256.

The protein belongs to the zona pellucida-binding protein Sp38 family. N-glycosylated. As to expression, expressed specifically in male germ cells.

It localises to the cytoplasmic vesicle. The protein localises to the secretory vesicle. It is found in the acrosome. The protein resides in the secreted. Its function is as follows. Is implicated in sperm-oocyte interaction during fertilization. This is Zona pellucida-binding protein 2 (Zpbp2) from Mus musculus (Mouse).